The primary structure comprises 404 residues: Probable tRNA sulfurtransferase (404 aa).

The THUMP domain occupies E60–E165. ATP is bound by residues M183–L184, H208–F209, R265, G287, and Q296.

Belongs to the ThiI family.

It localises to the cytoplasm. It carries out the reaction [ThiI sulfur-carrier protein]-S-sulfanyl-L-cysteine + a uridine in tRNA + 2 reduced [2Fe-2S]-[ferredoxin] + ATP + H(+) = [ThiI sulfur-carrier protein]-L-cysteine + a 4-thiouridine in tRNA + 2 oxidized [2Fe-2S]-[ferredoxin] + AMP + diphosphate. The catalysed reaction is [ThiS sulfur-carrier protein]-C-terminal Gly-Gly-AMP + S-sulfanyl-L-cysteinyl-[cysteine desulfurase] + AH2 = [ThiS sulfur-carrier protein]-C-terminal-Gly-aminoethanethioate + L-cysteinyl-[cysteine desulfurase] + A + AMP + 2 H(+). It functions in the pathway cofactor biosynthesis; thiamine diphosphate biosynthesis. Functionally, catalyzes the ATP-dependent transfer of a sulfur to tRNA to produce 4-thiouridine in position 8 of tRNAs, which functions as a near-UV photosensor. Also catalyzes the transfer of sulfur to the sulfur carrier protein ThiS, forming ThiS-thiocarboxylate. This is a step in the synthesis of thiazole, in the thiamine biosynthesis pathway. The sulfur is donated as persulfide by IscS. The sequence is that of Probable tRNA sulfurtransferase from Streptococcus uberis (strain ATCC BAA-854 / 0140J).